The sequence spans 364 residues: WAT1-related protein At5g47470 (364 aa).

10 helical membrane-spanning segments follow: residues 28 to 48, 59 to 79, 93 to 113, 124 to 144, 158 to 178, 197 to 217, 228 to 248, 255 to 275, 293 to 313, and 319 to 339; these read MVIV…SLLM, FTIV…FAIL, LIGK…SLFL, ATAM…IVGL, ILGT…HSTS, VVGC…VVLQ, ISLS…VLLL, VLAS…LAGA, PVFV…FAVL, and VSLG…LVLW. One can recognise an EamA 1 domain in the interval 40–172; it reads VYAGNSLLMS…LCVFGALAMS (133 aa). The 120-residue stretch at 219 to 338 folds into the EamA 2 domain; sequence STLAEFPAPI…LMFVGLYLVL (120 aa).

This sequence belongs to the drug/metabolite transporter (DMT) superfamily. Plant drug/metabolite exporter (P-DME) (TC 2.A.7.4) family.

Its subcellular location is the membrane. In Arabidopsis thaliana (Mouse-ear cress), this protein is WAT1-related protein At5g47470.